Reading from the N-terminus, the 587-residue chain is MRVLILLLMLLLPGLSQAQPGDDLFAPRGATQTDFLPVEKAFRFTWERLDDGQVQLRWQIAPGYYLYQKRLRFDGLDPALQPQLPPGESHSDEFFGESQVYRQSLELTLPAAAAGQLRLGWQGCADAGLCYPPQSQALDLGGTGPAAAGTSGEVAEDQGLAGSLQAGNLAWSLLLFFGLGLLLAFAPCSLPMLPILAGLVVGSGAGPRRGLLLAGSYVLSMALVYAGLGVVAALLGGNLQAWLQQPWLLGSFAALFVFLALPMFGFFELQLPAALRDRLDGLSRGRKGGSLAGAAALGALSGLLVGPCMTAPLAGALLYIAQTGNALHGGLVLFSLGLGIGMPLLLLVTVGSRFLPKPGPWMNLVKGVFGFLFLGTAWILLRPLLGEALWIGLGGALLLVLAYAALHTARGLARHAVLFGAAGCIFGLWGAAMLLGAAAGADDPWRPLQVYAAANRGATPTASAHEAFLTVSQPAELDRQLAAAKAEGQWVLLDYYADWCVSCRIMEKQVFAKPDVLAALQGVRLLRLDVTADNAASRELLHRYQVPGPPSLIWIGPEGEERRARRLTGEVDAGGFLAHWQATRERG.

Positions Met-1–Ala-18 are cleaved as a signal peptide. The Periplasmic segment spans residues Gln-19–Ser-172. Disulfide bonds link Cys-124–Cys-130 and Cys-188–Cys-308. The helical transmembrane segment at Leu-173–Leu-193 threads the bilayer. The Cytoplasmic segment spans residues Pro-194–Ser-216. A helical transmembrane segment spans residues Tyr-217 to Gly-237. The Periplasmic portion of the chain corresponds to Asn-238 to Pro-246. A helical membrane pass occupies residues Trp-247–Phe-267. The Cytoplasmic segment spans residues Glu-268–Ala-299. Residues Leu-300–Ile-320 form a helical membrane-spanning segment. Residues Ala-321–Gly-330 lie on the Periplasmic side of the membrane. The chain crosses the membrane as a helical span at residues Leu-331 to Gly-351. Residues Ser-352 to Pro-360 lie on the Cytoplasmic side of the membrane. A helical transmembrane segment spans residues Trp-361 to Leu-381. Over Arg-382–Pro-383 the chain is Periplasmic. The helical transmembrane segment at Leu-384–Ala-404 threads the bilayer. Residues Ala-405–Ala-416 lie on the Cytoplasmic side of the membrane. The helical transmembrane segment at Val-417 to Ala-437 threads the bilayer. The Periplasmic portion of the chain corresponds to Ala-438–Gly-587. One can recognise a Thioredoxin domain in the interval Leu-448–Glu-585. The cysteines at positions 500 and 503 are disulfide-linked.

The protein belongs to the thioredoxin family. DsbD subfamily.

The protein localises to the cell inner membrane. It catalyses the reaction [protein]-dithiol + NAD(+) = [protein]-disulfide + NADH + H(+). The enzyme catalyses [protein]-dithiol + NADP(+) = [protein]-disulfide + NADPH + H(+). Functionally, required to facilitate the formation of correct disulfide bonds in some periplasmic proteins and for the assembly of the periplasmic c-type cytochromes. Acts by transferring electrons from cytoplasmic thioredoxin to the periplasm. This transfer involves a cascade of disulfide bond formation and reduction steps. This Pseudomonas aeruginosa (strain ATCC 15692 / DSM 22644 / CIP 104116 / JCM 14847 / LMG 12228 / 1C / PRS 101 / PAO1) protein is Thiol:disulfide interchange protein DsbD 2.